The following is a 158-amino-acid chain: Mitotic-spindle organizing protein 2A (158 aa).

Position 34 is a phosphoserine (Ser34). The interval 84-158 (RLASEPQDPA…PGKSPTQGST (75 aa)) is disordered. Residues 112–122 (SAALGGVLALA) are compositionally biased toward low complexity. Over residues 128–140 (EGSSQRMPRQPSA) the composition is skewed to polar residues. Ser152 is modified (phosphoserine).

Belongs to the MOZART2 family. Associates with the gamma-tubulin ring complex (gTuRC) consisting of TUBGCP2, TUBGCP3, TUBGCP4, TUBGCP5 and TUBGCP6 and gamma-tubulin TUBG1 or TUBG2; within the complex, interacts with TUBGCP2; the interaction plays a role in gTuRC activation.

Its subcellular location is the cytoplasm. The protein resides in the cytoskeleton. It localises to the microtubule organizing center. The protein localises to the centrosome. It is found in the spindle. Required for the recruitment and the assembly of the gamma-tubulin ring complex (gTuRC) at the centrosome. The gTuRC regulates the minus-end nucleation of alpha-beta tubulin heterodimers that grow into microtubule protafilaments, a critical step in centrosome duplication and spindle formation. The protein is Mitotic-spindle organizing protein 2A (MZT2A) of Homo sapiens (Human).